A 67-amino-acid chain; its full sequence is Large ribosomal subunit protein bL35 (67 aa).

Over residues 1-16 (MPKMKTKSSAKKRFRV) the composition is skewed to basic residues. Residues 1–24 (MPKMKTKSSAKKRFRVRPGGTVKR) are disordered.

Belongs to the bacterial ribosomal protein bL35 family.

The polypeptide is Large ribosomal subunit protein bL35 (Delftia acidovorans (strain DSM 14801 / SPH-1)).